We begin with the raw amino-acid sequence, 56 residues long: Large ribosomal subunit protein bL32 (56 aa).

It belongs to the bacterial ribosomal protein bL32 family.

This is Large ribosomal subunit protein bL32 from Bacillus cereus (strain ATCC 14579 / DSM 31 / CCUG 7414 / JCM 2152 / NBRC 15305 / NCIMB 9373 / NCTC 2599 / NRRL B-3711).